A 346-amino-acid polypeptide reads, in one-letter code: Protein MelA (346 aa).

2 VOC domains span residues 12 to 141 (GIEF…DFEA) and 155 to 305 (EVDH…IFTK). Fe cation is bound by residues His158, His237, and Glu314.

This sequence belongs to the 4HPPD family. It depends on Fe cation as a cofactor.

The protein localises to the cytoplasm. The protein operates within pigment biosynthesis; melanin biosynthesis. The polypeptide is Protein MelA (melA) (Shewanella colwelliana (Alteromonas colwelliana)).